The chain runs to 167 residues: uncharacterized protein (167 aa).

A compositionally biased stretch (basic residues) spans 1–10 (MPLRRCRAWR). The segment at 1–23 (MPLRRCRAWRGHSQPGTGSRSNE) is disordered.

This is an uncharacterized protein from Sinorhizobium fredii (strain NBRC 101917 / NGR234).